The sequence spans 365 residues: Centrosomal protein of 41 kDa B (365 aa).

The span at 1-14 shows a compositional bias: basic and acidic residues; that stretch reads MSAKRSIGDPEILK. 2 disordered regions span residues 1–23 and 104–123; these read MSAKRSIGDPEILKKRIPQNQKY and EFLTDRPNGKGSPVSESKSP. One can recognise a Rhodanese domain in the interval 177–274; sequence EDCPFLLLDV…ISQKFPQGLT (98 aa). The segment at 329-365 is disordered; sequence TSTPSRLRLDSRNSKVPSSASSARSLSSTSSHSKPWK. The span at 342–365 shows a compositional bias: low complexity; that stretch reads SKVPSSASSARSLSSTSSHSKPWK.

Belongs to the CEP41 family.

The protein localises to the cytoplasm. It localises to the cytoskeleton. Its subcellular location is the microtubule organizing center. The protein resides in the centrosome. It is found in the cell projection. The protein localises to the cilium. It localises to the cilium basal body. Required during ciliogenesis for tubulin glutamylation in cilium. Probably acts by participating in the transport of tubulin polyglutamylases between the basal body and the cilium. The chain is Centrosomal protein of 41 kDa B (cep41-b) from Xenopus laevis (African clawed frog).